Consider the following 561-residue polypeptide: Glutamine--tRNA ligase (561 aa).

The 'HIGH' region motif lies at 34-44 (PEPNGYLHIGH). ATP-binding positions include 35–37 (EPN) and 41–47 (HIGHAKS). Residues Asp67 and Tyr212 each contribute to the L-glutamine site. ATP contacts are provided by residues Thr231, 261–262 (RL), and 269–271 (MSK). The short motif at 268–272 (VMSKR) is the 'KMSKS' region element.

The protein belongs to the class-I aminoacyl-tRNA synthetase family. Monomer.

The protein resides in the cytoplasm. The catalysed reaction is tRNA(Gln) + L-glutamine + ATP = L-glutaminyl-tRNA(Gln) + AMP + diphosphate. The polypeptide is Glutamine--tRNA ligase (Idiomarina loihiensis (strain ATCC BAA-735 / DSM 15497 / L2-TR)).